A 502-amino-acid polypeptide reads, in one-letter code: ATP synthase subunit alpha, chloroplastic (502 aa).

Glycine 170–threonine 177 is an ATP binding site.

It belongs to the ATPase alpha/beta chains family. In terms of assembly, F-type ATPases have 2 components, CF(1) - the catalytic core - and CF(0) - the membrane proton channel. CF(1) has five subunits: alpha(3), beta(3), gamma(1), delta(1), epsilon(1). CF(0) has four main subunits: a, b, b' and c.

It is found in the plastid. It localises to the chloroplast thylakoid membrane. The catalysed reaction is ATP + H2O + 4 H(+)(in) = ADP + phosphate + 5 H(+)(out). Produces ATP from ADP in the presence of a proton gradient across the membrane. The alpha chain is a regulatory subunit. The polypeptide is ATP synthase subunit alpha, chloroplastic (Tupiella akineta (Green alga)).